Here is a 202-residue protein sequence, read N- to C-terminus: Tumor necrosis factor alpha-induced protein 8-like protein 3 (202 aa).

The span at 1–10 (MDTDSGDLSE) shows a compositional bias: acidic residues. A disordered region spans residues 1-24 (MDTDSGDLSEGELSPGPEQFSSKS).

The protein belongs to the TNFAIP8 family.

It localises to the cytoplasm. Its subcellular location is the cell membrane. Its function is as follows. May act as a lipid transfer protein. The sequence is that of Tumor necrosis factor alpha-induced protein 8-like protein 3 (tnfaip8l3) from Xenopus laevis (African clawed frog).